We begin with the raw amino-acid sequence, 509 residues long: Maturase K (509 aa).

This sequence belongs to the intron maturase 2 family. MatK subfamily.

Its subcellular location is the plastid. It localises to the chloroplast. Functionally, usually encoded in the trnK tRNA gene intron. Probably assists in splicing its own and other chloroplast group II introns. This Metasequoia glyptostroboides (Dawn redwood) protein is Maturase K.